We begin with the raw amino-acid sequence, 326 residues long: Beta-ketoacyl-[acyl-carrier-protein] synthase III 2 (326 aa).

Catalysis depends on residues Cys114 and His251. The interval 252-256 (SANAR) is ACP-binding. Asn281 is an active-site residue.

Belongs to the thiolase-like superfamily. FabH family. Homodimer.

It is found in the cytoplasm. It carries out the reaction malonyl-[ACP] + acetyl-CoA + H(+) = 3-oxobutanoyl-[ACP] + CO2 + CoA. The protein operates within lipid metabolism; fatty acid biosynthesis. In terms of biological role, catalyzes the condensation reaction of fatty acid synthesis by the addition to an acyl acceptor of two carbons from malonyl-ACP. Catalyzes the first condensation reaction which initiates fatty acid synthesis and may therefore play a role in governing the total rate of fatty acid production. Possesses both acetoacetyl-ACP synthase and acetyl transacylase activities. Its substrate specificity determines the biosynthesis of branched-chain and/or straight-chain of fatty acids. In Staphylococcus epidermidis (strain ATCC 12228 / FDA PCI 1200), this protein is Beta-ketoacyl-[acyl-carrier-protein] synthase III 2.